The following is a 208-amino-acid chain: Uracil phosphoribosyltransferase (208 aa).

5-phospho-alpha-D-ribose 1-diphosphate is bound by residues arginine 78, arginine 103, and 130–138 (DPMLATGGS). Residues isoleucine 193 and 198–200 (GDA) each bind uracil. A 5-phospho-alpha-D-ribose 1-diphosphate-binding site is contributed by aspartate 199.

The protein belongs to the UPRTase family. The cofactor is Mg(2+).

The catalysed reaction is UMP + diphosphate = 5-phospho-alpha-D-ribose 1-diphosphate + uracil. It functions in the pathway pyrimidine metabolism; UMP biosynthesis via salvage pathway; UMP from uracil: step 1/1. Its activity is regulated as follows. Allosterically activated by GTP. Its function is as follows. Catalyzes the conversion of uracil and 5-phospho-alpha-D-ribose 1-diphosphate (PRPP) to UMP and diphosphate. The polypeptide is Uracil phosphoribosyltransferase (Mannheimia succiniciproducens (strain KCTC 0769BP / MBEL55E)).